Consider the following 138-residue polypeptide: Large ribosomal subunit protein uL16 (138 aa).

Belongs to the universal ribosomal protein uL16 family. Part of the 50S ribosomal subunit.

Functionally, binds 23S rRNA and is also seen to make contacts with the A and possibly P site tRNAs. This Ureaplasma parvum serovar 3 (strain ATCC 27815 / 27 / NCTC 11736) protein is Large ribosomal subunit protein uL16.